The primary structure comprises 98 residues: Small ribosomal subunit protein uS19 (98 aa).

2 disordered regions span residues 1 to 30 (MARS…KKSV) and 78 to 98 (RTFH…PAKK). Positions 9–24 (PFADKHLTKKVEDANK) are enriched in basic and acidic residues.

It belongs to the universal ribosomal protein uS19 family.

Its function is as follows. Protein S19 forms a complex with S13 that binds strongly to the 16S ribosomal RNA. This Anaeromyxobacter dehalogenans (strain 2CP-C) protein is Small ribosomal subunit protein uS19.